Consider the following 178-residue polypeptide: UPF0232 protein cgR_0005 (178 aa).

The tract at residues alanine 16 to glycine 55 is disordered.

Belongs to the UPF0232 family.

The protein is UPF0232 protein cgR_0005 of Corynebacterium glutamicum (strain R).